The primary structure comprises 461 residues: B3 domain-containing protein REM9 (461 aa).

The segment at residues 11–103 is a DNA-binding region (TF-B3 1); sequence NQHFFQPLLP…VFHVTALGPS (93 aa). Residues 110–146 form a disordered region; the sequence is PQSSRHEEGEESGENEISEKEGEENVQKESDKSSSDL. The segment covering 126 to 143 has biased composition (basic and acidic residues); the sequence is ISEKEGEENVQKESDKSS. 2 DNA-binding regions (TF-B3) span residues 148 to 244 and 230 to 332; these read CFSQ…CSRT and LQKA…EQPS. The tract at residues 333 to 415 is disordered; sequence FKAEDGRHKR…SGIEGNLQHT (83 aa). Positions 384 to 394 are enriched in basic and acidic residues; that stretch reads PKVEIREKIAE. Residues 400–415 show a composition bias toward polar residues; that stretch reads RASNKSSGIEGNLQHT.

The protein localises to the nucleus. The polypeptide is B3 domain-containing protein REM9 (REM9) (Arabidopsis thaliana (Mouse-ear cress)).